Here is a 589-residue protein sequence, read N- to C-terminus: Arginine--tRNA ligase (589 aa).

Positions 131–141 (ANPTGPLHVGH) match the 'HIGH' region motif.

Belongs to the class-I aminoacyl-tRNA synthetase family. In terms of assembly, monomer.

The protein localises to the cytoplasm. The catalysed reaction is tRNA(Arg) + L-arginine + ATP = L-arginyl-tRNA(Arg) + AMP + diphosphate. The sequence is that of Arginine--tRNA ligase from Legionella pneumophila subsp. pneumophila (strain Philadelphia 1 / ATCC 33152 / DSM 7513).